The primary structure comprises 128 residues: Large ribosomal subunit protein uL22 (128 aa).

This sequence belongs to the universal ribosomal protein uL22 family. In terms of assembly, part of the 50S ribosomal subunit.

Its function is as follows. This protein binds specifically to 23S rRNA; its binding is stimulated by other ribosomal proteins, e.g. L4, L17, and L20. It is important during the early stages of 50S assembly. It makes multiple contacts with different domains of the 23S rRNA in the assembled 50S subunit and ribosome. In terms of biological role, the globular domain of the protein is located near the polypeptide exit tunnel on the outside of the subunit, while an extended beta-hairpin is found that lines the wall of the exit tunnel in the center of the 70S ribosome. The protein is Large ribosomal subunit protein uL22 of Prochlorococcus marinus subsp. pastoris (strain CCMP1986 / NIES-2087 / MED4).